Consider the following 506-residue polypeptide: MEMTANRLIVFDTTLRDGEQCPGASMTSRQKLEVAKQLARLGVDVIEAGFPVISQGDFESVSEIAAQVKGPKICGLARCLPKDIEAAAEALKAAADAARIHVFLATSQIHRRFKLAKDEEEIVRIAVEGVRLAKRYVQDVEFSAEDASRTEPEFLAKIIQKVIEAGATTVNIPDTVGYAVPEEFASLIRYLFDHVQDIDKVVVSVHCHNDLGLAVSNSLAAIKAGARQVEGTINGIGERAGNAALEEIIMALHTRPDAFGKIETGIQLKEILRTSRLVSRMSGLAVQRNKAVVGENAFAHAAGIHQDGILKKRETYEIIDPKIIGWEQSELPLTKHSGRAALENRLKILGFELEKEEIDNIFSQFKQIGDKKKFIYDDDLVSLVEGQISRIKETYELEYVAVTVCSGGIPMATIKLRHGEEVLVDASTGDGAVDAAMKAVDRITGQHGHLVEYEVKSVTEGKDAIGEVTVKVNFDSKKLVTAKAASTDVIEASIKAYLNAVNKALL.

The Pyruvate carboxyltransferase domain occupies 8–272 (LIVFDTTLRD…ETGIQLKEIL (265 aa)). Residues aspartate 17, histidine 206, histidine 208, and asparagine 242 each contribute to the Mn(2+) site. The tract at residues 396 to 506 (ELEYVAVTVC…YLNAVNKALL (111 aa)) is regulatory domain.

Belongs to the alpha-IPM synthase/homocitrate synthase family. LeuA type 1 subfamily. Homodimer. Mn(2+) is required as a cofactor.

The protein localises to the cytoplasm. The enzyme catalyses 3-methyl-2-oxobutanoate + acetyl-CoA + H2O = (2S)-2-isopropylmalate + CoA + H(+). It participates in amino-acid biosynthesis; L-leucine biosynthesis; L-leucine from 3-methyl-2-oxobutanoate: step 1/4. Functionally, catalyzes the condensation of the acetyl group of acetyl-CoA with 3-methyl-2-oxobutanoate (2-ketoisovalerate) to form 3-carboxy-3-hydroxy-4-methylpentanoate (2-isopropylmalate). The protein is 2-isopropylmalate synthase of Methylacidiphilum infernorum (isolate V4) (Methylokorus infernorum (strain V4)).